A 400-amino-acid chain; its full sequence is MKEKVVLAYSGGLDTSVTIPWLKDNYDVEVIAVCVNVGQEDDMDKVKEKAVNSGAAKIYVEDVKEEFVTEYLYNAIKWNATYEGKYLLGTSFARPLIAKKLVEVAHKEGAKYICHGCTGKGNDQVRFETAIAAMDPYIKIIAPWRLWNIDSREAEIDYALSKGVEVPVTKEKIYSEDWNLWHISHEGGDLEDPKNEHKEEMYKCVTPPEEAKDEPAYISIYFEKGVPCKINGEELEPVKLIEKVNKVAGENGIGVVDLVENRLVGMKSRGVYETPGGTLLYEAHAQLERLTVDKDAYHYKQVLALKYSELVYDGLWFTTTREALDAFVDTVEENVTGTVKLKLYKGNMKVSSVESENALYDEGISSFGASDLYDHKDAQGFINLFSLPSKIKAMKKLEKK.

Ala8–Ser16 contacts ATP. Residues Tyr86 and Ser91 each coordinate L-citrulline. ATP is bound at residue Gly116. Residues Thr118, Asn122, and Asp123 each contribute to the L-aspartate site. Asn122 contributes to the L-citrulline binding site. L-citrulline-binding residues include Arg126, Ser175, Ser184, Glu260, and Tyr272.

The protein belongs to the argininosuccinate synthase family. Type 1 subfamily. Homotetramer.

It localises to the cytoplasm. The catalysed reaction is L-citrulline + L-aspartate + ATP = 2-(N(omega)-L-arginino)succinate + AMP + diphosphate + H(+). The protein operates within amino-acid biosynthesis; L-arginine biosynthesis; L-arginine from L-ornithine and carbamoyl phosphate: step 2/3. The sequence is that of Argininosuccinate synthase from Clostridium acetobutylicum (strain ATCC 824 / DSM 792 / JCM 1419 / IAM 19013 / LMG 5710 / NBRC 13948 / NRRL B-527 / VKM B-1787 / 2291 / W).